Here is an 892-residue protein sequence, read N- to C-terminus: Formin-like protein 8 (892 aa).

Residues 1–23 (MPPAIARFVAIAAVLLCGHVAVA) form the signal peptide. The interval 43-119 (FPIEWTPPPS…SGSGSGHHGG (77 aa)) is disordered. Residues 47–59 (WTPPPSPPPPPAP) show a composition bias toward pro residues. A compositionally biased stretch (low complexity) spans 87 to 111 (TTPTSPGTTPSPTTVAADVSKTPSG). The helical transmembrane segment at 126-146 (IVAAGAGAAAAVALLGFACAF) threads the bilayer. Positions 188-457 (PTTPARHHGP…GSGEPRPKLK (270 aa)) are disordered. Positions 210–230 (LRSERARRGVSRDEDADHPSP) are enriched in basic and acidic residues. Low complexity-rich tracts occupy residues 268–286 (AEAW…TTAS), 297–306 (FFPPVAAIAA), and 321–330 (RTRFSTGSTP). The span at 339–383 (SPRPVQPSNAPPPPPPPPPPPPPPPPPKLNTAPKPPPPPPPPPSV) shows a compositional bias: pro residues. Residues 424 to 436 (AATTVDNNGSTSM) are compositionally biased toward polar residues. In terms of domain architecture, FH2 spans 446-867 (DGGSGEPRPK…GSARSFRISA (422 aa)).

Belongs to the formin-like family. Class-I subfamily.

It localises to the membrane. The chain is Formin-like protein 8 (FH8) from Oryza sativa subsp. japonica (Rice).